We begin with the raw amino-acid sequence, 97 residues long: MLTIYGISRTKCGKKASRRLRLQNKFPAIIHVSLISNISIELSQNDFINIEMKNSDFYKSEVILIVDKVKYIVKIQEIQRHAFKSKILHIDFLKVSV.

It belongs to the bacterial ribosomal protein bL25 family. Part of the 50S ribosomal subunit; part of the 5S rRNA/L5/L18/L25 subcomplex. Contacts the 5S rRNA. Binds to the 5S rRNA independently of L5 and L18.

Functionally, this is one of the proteins that binds to the 5S RNA in the ribosome where it forms part of the central protuberance. The sequence is that of Large ribosomal subunit protein bL25 from Buchnera aphidicola subsp. Baizongia pistaciae (strain Bp).